Consider the following 505-residue polypeptide: Glutamyl-tRNA(Gln) amidotransferase subunit A (505 aa).

Catalysis depends on charge relay system residues lysine 80 and serine 155. The Acyl-ester intermediate role is filled by serine 179.

It belongs to the amidase family. GatA subfamily. As to quaternary structure, heterotrimer of A, B and C subunits.

The catalysed reaction is L-glutamyl-tRNA(Gln) + L-glutamine + ATP + H2O = L-glutaminyl-tRNA(Gln) + L-glutamate + ADP + phosphate + H(+). Functionally, allows the formation of correctly charged Gln-tRNA(Gln) through the transamidation of misacylated Glu-tRNA(Gln) in organisms which lack glutaminyl-tRNA synthetase. The reaction takes place in the presence of glutamine and ATP through an activated gamma-phospho-Glu-tRNA(Gln). The polypeptide is Glutamyl-tRNA(Gln) amidotransferase subunit A (Acidothermus cellulolyticus (strain ATCC 43068 / DSM 8971 / 11B)).